Here is a 995-residue protein sequence, read N- to C-terminus: KN motif and ankyrin repeat domain-containing protein 4 (995 aa).

2 disordered regions span residues 1-29 and 68-127; these read MEKT…SVET and TLPR…EVSY. Positions 101 to 124 are enriched in polar residues; it reads LGTQEQNQSPPLGNAPQASTSRSE. A coiled-coil region spans residues 343–404; the sequence is SSLKQQVSAL…EGQFHQENAK (62 aa). 5 disordered regions span residues 443 to 467, 503 to 558, 617 to 642, 663 to 705, and 721 to 740; these read ESWG…GNQS, EAGT…PTDA, QAHP…TSLK, LQFV…PDHK, and PEGT…VPHS. The segment covering 511 to 523 has biased composition (gly residues); that stretch reads GPQGGTRGAGGFL. Over residues 526–549 the composition is skewed to basic and acidic residues; that stretch reads SDRKTPPAGREETSSNLPGKEHPG. A compositionally biased stretch (low complexity) spans 625–640; that stretch reads PASSSSPPVEISPSTS. A compositionally biased stretch (acidic residues) spans 680-693; it reads TSGEDSTPEDLSDS. Basic and acidic residues predominate over residues 694-705; sequence EAEKKCDGPDHK. 5 ANK repeats span residues 823 to 853, 862 to 890, 895 to 924, 928 to 958, and 962 to 992; these read NGNT…NVDH, VMIT…NVNI, GGQT…DVNL, DGSS…DSSL, and AGRT…QGRS.

Strongly expressed in colon, liver, lung, skeletal muscle and kidney.

The protein resides in the cytoplasm. Functionally, may be involved in the control of cytoskeleton formation by regulating actin polymerization. The protein is KN motif and ankyrin repeat domain-containing protein 4 (KANK4) of Homo sapiens (Human).